The primary structure comprises 371 residues: Aspartate-semialdehyde dehydrogenase (371 aa).

NADP(+) contacts are provided by residues 9–12, 37–38, and Q73; these read RGMV and TS. Position 102 (R102) interacts with phosphate. C135 functions as the Acyl-thioester intermediate in the catalytic mechanism. Q162 serves as a coordination point for substrate. Residues 165–166 and P193 contribute to the NADP(+) site; that span reads SG. E241 is a substrate binding site. K244 provides a ligand contact to phosphate. R268 lines the substrate pocket. H275 acts as the Proton acceptor in catalysis. An NADP(+)-binding site is contributed by Q351.

This sequence belongs to the aspartate-semialdehyde dehydrogenase family. In terms of assembly, homodimer.

The catalysed reaction is L-aspartate 4-semialdehyde + phosphate + NADP(+) = 4-phospho-L-aspartate + NADPH + H(+). It participates in amino-acid biosynthesis; L-lysine biosynthesis via DAP pathway; (S)-tetrahydrodipicolinate from L-aspartate: step 2/4. Its pathway is amino-acid biosynthesis; L-methionine biosynthesis via de novo pathway; L-homoserine from L-aspartate: step 2/3. The protein operates within amino-acid biosynthesis; L-threonine biosynthesis; L-threonine from L-aspartate: step 2/5. Its function is as follows. Catalyzes the NADPH-dependent formation of L-aspartate-semialdehyde (L-ASA) by the reductive dephosphorylation of L-aspartyl-4-phosphate. This Neisseria meningitidis serogroup B (strain ATCC BAA-335 / MC58) protein is Aspartate-semialdehyde dehydrogenase.